The primary structure comprises 688 residues: Glycine--tRNA ligase beta subunit (688 aa).

Belongs to the class-II aminoacyl-tRNA synthetase family. In terms of assembly, tetramer of two alpha and two beta subunits.

The protein resides in the cytoplasm. The enzyme catalyses tRNA(Gly) + glycine + ATP = glycyl-tRNA(Gly) + AMP + diphosphate. The polypeptide is Glycine--tRNA ligase beta subunit (Haemophilus influenzae (strain PittGG)).